The primary structure comprises 159 residues: Phosphopantetheine adenylyltransferase (159 aa).

S8 serves as a coordination point for substrate. ATP-binding positions include 8–9 and H16; that span reads SF. Residues K40, T72, and R86 each coordinate substrate. ATP-binding positions include 87 to 89, E97, and 122 to 128; these read GLR and HSFVSSS.

The protein belongs to the bacterial CoaD family. Homohexamer. Requires Mg(2+) as cofactor.

The protein resides in the cytoplasm. The catalysed reaction is (R)-4'-phosphopantetheine + ATP + H(+) = 3'-dephospho-CoA + diphosphate. Its pathway is cofactor biosynthesis; coenzyme A biosynthesis; CoA from (R)-pantothenate: step 4/5. Functionally, reversibly transfers an adenylyl group from ATP to 4'-phosphopantetheine, yielding dephospho-CoA (dPCoA) and pyrophosphate. The polypeptide is Phosphopantetheine adenylyltransferase (Synechococcus sp. (strain JA-2-3B'a(2-13)) (Cyanobacteria bacterium Yellowstone B-Prime)).